We begin with the raw amino-acid sequence, 420 residues long: Annetocin receptor (420 aa).

Residues 1 to 54 (MEMDDDEAILLDDIYALASTPNQTIVTSSFPQTVSPGFLARRNEALAMVEVAVQ) are Extracellular-facing. N-linked (GlcNAc...) asparagine glycosylation is present at Asn22. The helical transmembrane segment at 55-75 (STILILTVVGNAAVLAMIVSL) threads the bilayer. Over 76 to 83 (SRHKDLGR) the chain is Cytoplasmic. Residues 84–104 (MYTMIGHLSCADLFVAIFNLL) form a helical membrane-spanning segment. The Extracellular portion of the chain corresponds to 105–124 (PQLLWDVTHRFRGGRVLCKL). A disulfide bond links Cys122 and Cys201. Residues 125–145 (VKYVQVVAMYASAYVLMSTAV) form a helical membrane-spanning segment. Residues 146 to 166 (DRYTAICHPMRSHTWTSTTAH) lie on the Cytoplasmic side of the membrane. A helical membrane pass occupies residues 167–187 (YLVIGAWVLALVFAVPQLVIF). At 188-212 (DYVEVVPGSGVYDCVDHFRPRWTLP) the chain is on the extracellular side. The helical transmembrane segment at 213–233 (VYITWFALAVYVIPLVVLATI) threads the bilayer. Over 234–328 (YLRICVVVWK…KTKTVKLTLT (95 aa)) the chain is Cytoplasmic. The helical transmembrane segment at 329–349 (VVISYLVCWAPFFVSHIWSAW) threads the bilayer. Over 350–360 (DPHAPFEGTEM) the chain is Extracellular. The helical transmembrane segment at 361–381 (VITLLLGSLNSCINPWIYLAF) threads the bilayer. The Cytoplasmic segment spans residues 382-420 (SDQLRRKVTQCCPRSWGQRPSTLSHDSTDFRSGSRPTHS). The disordered stretch occupies residues 397–420 (WGQRPSTLSHDSTDFRSGSRPTHS). Positions 399 to 420 (QRPSTLSHDSTDFRSGSRPTHS) are enriched in polar residues.

The protein belongs to the G-protein coupled receptor 1 family. Vasopressin/oxytocin receptor subfamily. In terms of tissue distribution, nephridia in clitellum region.

Its subcellular location is the cell membrane. Functionally, receptor for annetocin. Activation by annetocin may induce egg-laying behavior through calcium-dependent signaling. The chain is Annetocin receptor from Eisenia fetida (Red wiggler worm).